The chain runs to 1417 residues: DExH-box ATP-dependent RNA helicase DExH4, chloroplastic (1417 aa).

Over residues 1–12 the composition is skewed to basic residues; it reads MAPTKKPQKNKQ. The segment at 1–37 is disordered; the sequence is MAPTKKPQKNKQSKNEIASSLIPNSGHKKPSKAPKLL. Residues 1 to 61 constitute a chloroplast transit peptide; sequence MAPTKKPQKN…NFRRTPSPVT (61 aa). The Helicase ATP-binding domain occupies 607-781; that stretch reads LQKLKEKDVL…FGQCPIITAQ (175 aa). Residue 620–627 participates in ATP binding; the sequence is GETGSGKT. The short motif at 722 to 725 is the DEIH box element; that stretch reads DEVH. The region spanning 868–1043 is the Helicase C-terminal domain; sequence LLEELICHID…ELCLHIKLLG (176 aa).

The protein belongs to the DExH box helicase family.

The protein resides in the plastid. It is found in the chloroplast. The enzyme catalyses ATP + H2O = ADP + phosphate + H(+). The chain is DExH-box ATP-dependent RNA helicase DExH4, chloroplastic from Arabidopsis thaliana (Mouse-ear cress).